Reading from the N-terminus, the 814-residue chain is Echinoderm microtubule-associated protein-like 1 (814 aa).

A coiled-coil region spans residues 31–72; it reads SMEVSDRIASLEQRVQMQEDDIQLLKSALADVVRRLNITEEQ. A disordered region spans residues 77-180; it reads NRKGPTKARP…ESKPKEPAFS (104 aa). Positions 92 to 101 are enriched in polar residues; that stretch reads PLRTTVNNGT. The segment covering 103–115 has biased composition (low complexity); sequence LPKKPSASLPAPS. Over residues 127–137 the composition is skewed to polar residues; sequence KSINRTSSSER. Basic and acidic residues predominate over residues 142–152; that stretch reads GRRESSGDSKG. The span at 155-167 shows a compositional bias: low complexity; that stretch reads NRTGSTSSSSSGK. The tandem atypical propeller in EMLs stretch occupies residues 175–814; sequence KEPAFSPEEG…DTSIMQWRVI (640 aa). WD repeat units lie at residues 260–309, 314–357, 362–399, 408–445, 449–488, 492–529, 534–571, 577–612, 616–654, 663–700, 708–767, and 774–813; these read EQLQ…IWDS, TLHV…VWDW, RLADVKCSNEAVFAADFHPTDTNIIVTCGKSHLYFWTL, QGLFEKQEKPKFVLCVTFSENGDTITGDSSGNILVWGK, RISYAVQGAHEGGIFALCMLRDGTLVSGGGKDRRLISWNG, KLHKAEIPEQFGPIRTVAEGKGNVILIGTTRNFVLQGT, FTPITQGHTDELWGLAIHASKPQFLTCGHDKHATLWDA, VWDKIIEDPAQSSGFHPSGSVVAVGTLTGRWFVFDT, DLVTVHTDGNEQLSVMRYSPDGNFLAIGSHDNCIYIYGV, RVGKCSGHSSFITHLDWSVNSQFLVSNSGDYEILYWVP, SVET…LFSY, and APSHIYSGHSSHVTNVDFLCEDSHLISTGGKDTSIMQWRV.

The protein belongs to the WD repeat EMAP family. In terms of assembly, homotrimer; self-association is mediated by the N-terminal coiled coil. Does not interact with EML3. Binds unpolymerized tubulins via its WD repeat region. Binds repolymerizing microtubules. Interacts with TASOR. Detected in adult brain cortex, hippocampus and thalamus. Expressed in the stomach, lungs and in Sertoli cells of the testis.

The protein localises to the cytoplasm. The protein resides in the perinuclear region. It localises to the cytoskeleton. Modulates the assembly and organization of the microtubule cytoskeleton, and probably plays a role in regulating the orientation of the mitotic spindle and the orientation of the plane of cell division. Required for normal proliferation of neuronal progenitor cells in the developing brain and for normal brain development. Does not affect neuron migration per se. In Mus musculus (Mouse), this protein is Echinoderm microtubule-associated protein-like 1 (Eml1).